Reading from the N-terminus, the 112-residue chain is Small ribosomal subunit protein bS6 (112 aa).

Belongs to the bacterial ribosomal protein bS6 family.

Binds together with bS18 to 16S ribosomal RNA. This Christiangramia forsetii (strain DSM 17595 / CGMCC 1.15422 / KT0803) (Gramella forsetii) protein is Small ribosomal subunit protein bS6.